Reading from the N-terminus, the 263-residue chain is MDCPSCKVSYDEEVFTDNLMVCPHCNCHLRIEPRQRITYLTDENSFQELYPNLKTCNPIEMEGYEEKISAAEEKASLNEAVITGSCKIKGRDALLALMSFHFMGGSMGSVVGEKISRLMLKGATERIPVIIYATSGGARMQEGLFSLMQMAKTSSAAAELDEKGVPLFIMLCDPTTGGVTASFAMLGDITAAEPGALIGFAGPRVIEGTIRQQLPEGFQRAEFQLEKGFVDCIVPRQEQRQFFARMIDAHSLGLKETPKKKKA.

One can recognise a CoA carboxyltransferase N-terminal domain in the interval Met1 to Ala263. The Zn(2+) site is built by Cys3, Cys6, Cys22, and Cys25. The segment at Cys3 to Cys25 adopts a C4-type zinc-finger fold.

Belongs to the AccD/PCCB family. Acetyl-CoA carboxylase is a heterohexamer composed of biotin carboxyl carrier protein (AccB), biotin carboxylase (AccC) and two subunits each of ACCase subunit alpha (AccA) and ACCase subunit beta (AccD). Zn(2+) serves as cofactor.

The protein resides in the cytoplasm. The enzyme catalyses N(6)-carboxybiotinyl-L-lysyl-[protein] + acetyl-CoA = N(6)-biotinyl-L-lysyl-[protein] + malonyl-CoA. Its pathway is lipid metabolism; malonyl-CoA biosynthesis; malonyl-CoA from acetyl-CoA: step 1/1. Functionally, component of the acetyl coenzyme A carboxylase (ACC) complex. Biotin carboxylase (BC) catalyzes the carboxylation of biotin on its carrier protein (BCCP) and then the CO(2) group is transferred by the transcarboxylase to acetyl-CoA to form malonyl-CoA. This Treponema denticola (strain ATCC 35405 / DSM 14222 / CIP 103919 / JCM 8153 / KCTC 15104) protein is Acetyl-coenzyme A carboxylase carboxyl transferase subunit beta.